Reading from the N-terminus, the 158-residue chain is SsrA-binding protein (158 aa).

It belongs to the SmpB family.

The protein resides in the cytoplasm. In terms of biological role, required for rescue of stalled ribosomes mediated by trans-translation. Binds to transfer-messenger RNA (tmRNA), required for stable association of tmRNA with ribosomes. tmRNA and SmpB together mimic tRNA shape, replacing the anticodon stem-loop with SmpB. tmRNA is encoded by the ssrA gene; the 2 termini fold to resemble tRNA(Ala) and it encodes a 'tag peptide', a short internal open reading frame. During trans-translation Ala-aminoacylated tmRNA acts like a tRNA, entering the A-site of stalled ribosomes, displacing the stalled mRNA. The ribosome then switches to translate the ORF on the tmRNA; the nascent peptide is terminated with the 'tag peptide' encoded by the tmRNA and targeted for degradation. The ribosome is freed to recommence translation, which seems to be the essential function of trans-translation. This chain is SsrA-binding protein, found in Glaesserella parasuis serovar 5 (strain SH0165) (Haemophilus parasuis).